The primary structure comprises 139 residues: ATP synthase epsilon chain (139 aa).

Belongs to the ATPase epsilon chain family. As to quaternary structure, F-type ATPases have 2 components, CF(1) - the catalytic core - and CF(0) - the membrane proton channel. CF(1) has five subunits: alpha(3), beta(3), gamma(1), delta(1), epsilon(1). CF(0) has three main subunits: a, b and c.

The protein resides in the cell membrane. In terms of biological role, produces ATP from ADP in the presence of a proton gradient across the membrane. This chain is ATP synthase epsilon chain, found in Streptococcus sanguinis.